A 144-amino-acid chain; its full sequence is Large ribosomal subunit protein uL13 (144 aa).

It belongs to the universal ribosomal protein uL13 family. Part of the 50S ribosomal subunit.

Functionally, this protein is one of the early assembly proteins of the 50S ribosomal subunit, although it is not seen to bind rRNA by itself. It is important during the early stages of 50S assembly. The protein is Large ribosomal subunit protein uL13 of Clostridium kluyveri (strain NBRC 12016).